The sequence spans 152 residues: Nucleoside diphosphate kinase A (152 aa).

ATP is bound by residues lysine 12, phenylalanine 60, arginine 88, and threonine 94. A Glycyl lysine isopeptide (Lys-Gly) (interchain with G-Cter in ubiquitin) cross-link involves residue lysine 100. Positions 105 and 115 each coordinate ATP. The active-site Pros-phosphohistidine intermediate is histidine 118. Phosphoserine is present on residues serine 120, serine 122, and serine 125.

The protein belongs to the NDK family. As to quaternary structure, hexamer of two different chains: An and B (A6, A5B, A4B2, A3B3, A2B4, AB5, B6). Interacts with PRUNE1. Component of the SET complex, composed of at least ANP32A, APEX1, HMGB2, NME1, SET and TREX1. Within this complex, interacts directly with SET. Also interacts with TREX1, but only following translocation to the nucleus. Mg(2+) serves as cofactor.

The protein resides in the cytoplasm. It is found in the nucleus. The catalysed reaction is a 2'-deoxyribonucleoside 5'-diphosphate + ATP = a 2'-deoxyribonucleoside 5'-triphosphate + ADP. It carries out the reaction a ribonucleoside 5'-diphosphate + ATP = a ribonucleoside 5'-triphosphate + ADP. Autophosphorylation at His-118 increases serine/threonine protein kinase activity of the enzyme. Interaction with the SET complex inhibits exonuclease activity. Functionally, major role in the synthesis of nucleoside triphosphates other than ATP. The ATP gamma phosphate is transferred to the NDP beta phosphate via a ping-pong mechanism, using a phosphorylated active-site intermediate. Possesses nucleoside-diphosphate kinase, serine/threonine-specific protein kinase, geranyl and farnesyl pyrophosphate kinase, histidine protein kinase and 3'-5' exonuclease activities. Involved in cell proliferation, differentiation and development, signal transduction, G protein-coupled receptor endocytosis, and gene expression. Required for neural development including neural patterning and cell fate determination. During GZMA-mediated cell death, works in concert with TREX1. NME1 nicks one strand of DNA and TREX1 removes bases from the free 3' end to enhance DNA damage and prevent DNA end reannealing and rapid repair. This is Nucleoside diphosphate kinase A (Nme1) from Rattus norvegicus (Rat).